Here is a 138-residue protein sequence, read N- to C-terminus: Transcription antitermination protein NusB (138 aa).

The protein belongs to the NusB family.

Functionally, involved in transcription antitermination. Required for transcription of ribosomal RNA (rRNA) genes. Binds specifically to the boxA antiterminator sequence of the ribosomal RNA (rrn) operons. This chain is Transcription antitermination protein NusB, found in Helicobacter pylori (strain ATCC 700392 / 26695) (Campylobacter pylori).